A 297-amino-acid chain; its full sequence is Homoserine kinase (297 aa).

84–94 (PPARGLGSSAT) is an ATP binding site.

The protein belongs to the GHMP kinase family. Homoserine kinase subfamily.

The protein resides in the cytoplasm. The catalysed reaction is L-homoserine + ATP = O-phospho-L-homoserine + ADP + H(+). Its pathway is amino-acid biosynthesis; L-threonine biosynthesis; L-threonine from L-aspartate: step 4/5. Catalyzes the ATP-dependent phosphorylation of L-homoserine to L-homoserine phosphate. The protein is Homoserine kinase (thrB) of Aquifex aeolicus (strain VF5).